We begin with the raw amino-acid sequence, 186 residues long: MSLNTQIPEVLWAQRSNKDDAEKNVIYLTVLIPDAVDPKINLTPEKLVIDSKSGANAHYAVQIDFFKDIDVEKSKYSVTGRYIFFVLYKKELQEEFWPRLTKEKLRLHWLRTDFDRWVDEDEQEAQPEVSPFGAGGMPDLSALGGMGGMDFSQFGNLGGAGAGEDASDSEPELEEEEEVGSNEKKE.

Residues 5–101 (TQIPEVLWAQ…LQEEFWPRLT (97 aa)) form the CS domain. The disordered stretch occupies residues 121-186 (DEQEAQPEVS…EEVGSNEKKE (66 aa)). Over residues 165-180 (DASDSEPELEEEEEVG) the composition is skewed to acidic residues.

Belongs to the p23/wos2 family.

Cell cycle regulatory protein that interacts with cdc2 in the control of the M-G1 transition. The sequence is that of Protein wos2 (wos2) from Schizosaccharomyces pombe (strain 972 / ATCC 24843) (Fission yeast).